The chain runs to 849 residues: Alanine--tRNA ligase (849 aa).

The Zn(2+) site is built by H551, H555, C653, and H657.

The protein belongs to the class-II aminoacyl-tRNA synthetase family. Requires Zn(2+) as cofactor.

The protein localises to the cytoplasm. The catalysed reaction is tRNA(Ala) + L-alanine + ATP = L-alanyl-tRNA(Ala) + AMP + diphosphate. Its function is as follows. Catalyzes the attachment of alanine to tRNA(Ala) in a two-step reaction: alanine is first activated by ATP to form Ala-AMP and then transferred to the acceptor end of tRNA(Ala). Also edits incorrectly charged Ser-tRNA(Ala) and Gly-tRNA(Ala) via its editing domain. The polypeptide is Alanine--tRNA ligase (Sulfurimonas denitrificans (strain ATCC 33889 / DSM 1251) (Thiomicrospira denitrificans (strain ATCC 33889 / DSM 1251))).